The primary structure comprises 498 residues: WD repeat-containing protein 55 homolog (498 aa).

A disordered region spans residues Met-1–Glu-131. Acidic residues-rich tracts occupy residues Asp-12–Met-23 and Ile-31–Leu-48. Low complexity-rich tracts occupy residues Asn-67–Asp-82 and Ala-93–Ser-103. WD repeat units lie at residues Lys-154–Leu-193, Val-198–Leu-237, Ala-241–Glu-279, Glu-282–Gln-321, Pro-324–Asp-363, and Gln-408–Asp-447. A disordered region spans residues Asp-478–Ala-498.

It belongs to the WD repeat WDR55 family.

The sequence is that of WD repeat-containing protein 55 homolog from Drosophila melanogaster (Fruit fly).